Here is a 249-residue protein sequence, read N- to C-terminus: Urease accessory protein UreG (249 aa).

Residues 1–13 (MHLGHEEFQRTDG) show a composition bias toward basic and acidic residues. The disordered stretch occupies residues 1-34 (MHLGHEEFQRTDGRASTGPADAGPAGAGRAPRIG). Low complexity predominate over residues 18–33 (GPADAGPAGAGRAPRI). Residue 37 to 44 (GPVGSGKT) participates in GTP binding. The segment at 229–249 (PRGGSYDASDASNASQPLNRM) is disordered. Residues 238–249 (DASNASQPLNRM) are compositionally biased toward polar residues.

The protein belongs to the SIMIBI class G3E GTPase family. UreG subfamily. As to quaternary structure, homodimer. UreD, UreF and UreG form a complex that acts as a GTP-hydrolysis-dependent molecular chaperone, activating the urease apoprotein by helping to assemble the nickel containing metallocenter of UreC. The UreE protein probably delivers the nickel.

The protein localises to the cytoplasm. In terms of biological role, facilitates the functional incorporation of the urease nickel metallocenter. This process requires GTP hydrolysis, probably effectuated by UreG. The chain is Urease accessory protein UreG from Frankia casuarinae (strain DSM 45818 / CECT 9043 / HFP020203 / CcI3).